The sequence spans 253 residues: MLLKGKTAVISGAASKRGIGRATAELFASHGARVAILDINADEAKAAAGDLPPVEHGAHIGLRCDVADRASCTSASDEVLSAFGVANILINNAGITQPVKTLDISDADWQRIVAVNMTGVLNLSQVFIPNMRQNGGGSIACMSSVSAQRGGGIFGGPHYSAAKAGVLGLAKAMAREFGPDSIRVNCVTPGLIQTDITGDKLSAEMRADIVKGIPLSRLGDARDVANIYLFLASDLSAYVTGAVIDVNGGMLIH.

Ile-10–Ala-35 is a binding site for NADP(+). A substrate-binding site is contributed by Ser-144. Tyr-159 serves as the catalytic Proton acceptor.

It belongs to the short-chain dehydrogenases/reductases (SDR) family.

This is an uncharacterized protein from Sinorhizobium fredii (strain NBRC 101917 / NGR234).